Consider the following 160-residue polypeptide: Phosphopantetheine adenylyltransferase (160 aa).

Residue Ser9 coordinates substrate. Residues 9 to 10 and His17 contribute to the ATP site; that span reads SF. Substrate-binding residues include Lys41, Leu73, and Lys87. Residues 88–90, Glu98, and 123–129 each bind ATP; these read GLR and YSYLSSS.

The protein belongs to the bacterial CoaD family. As to quaternary structure, homohexamer. The cofactor is Mg(2+).

It is found in the cytoplasm. It carries out the reaction (R)-4'-phosphopantetheine + ATP + H(+) = 3'-dephospho-CoA + diphosphate. The protein operates within cofactor biosynthesis; coenzyme A biosynthesis; CoA from (R)-pantothenate: step 4/5. Its function is as follows. Reversibly transfers an adenylyl group from ATP to 4'-phosphopantetheine, yielding dephospho-CoA (dPCoA) and pyrophosphate. The polypeptide is Phosphopantetheine adenylyltransferase (Clostridium tetani (strain Massachusetts / E88)).